A 390-amino-acid polypeptide reads, in one-letter code: tRNA-specific 2-thiouridylase MnmA (390 aa).

ATP contacts are provided by residues 20–27 (AMSGGVDS) and Leu-46. Catalysis depends on Cys-114, which acts as the Nucleophile. An intrachain disulfide couples Cys-114 to Cys-211. Gly-138 provides a ligand contact to ATP. The segment at 161–163 (RDQ) is interaction with tRNA. Cys-211 serves as the catalytic Cysteine persulfide intermediate.

This sequence belongs to the MnmA/TRMU family.

The protein resides in the cytoplasm. The enzyme catalyses S-sulfanyl-L-cysteinyl-[protein] + uridine(34) in tRNA + AH2 + ATP = 2-thiouridine(34) in tRNA + L-cysteinyl-[protein] + A + AMP + diphosphate + H(+). Catalyzes the 2-thiolation of uridine at the wobble position (U34) of tRNA, leading to the formation of s(2)U34. The polypeptide is tRNA-specific 2-thiouridylase MnmA (Azorhizobium caulinodans (strain ATCC 43989 / DSM 5975 / JCM 20966 / LMG 6465 / NBRC 14845 / NCIMB 13405 / ORS 571)).